Here is a 540-residue protein sequence, read N- to C-terminus: Probable tubulin polyglutamylase TTLL2 (540 aa).

Residues Leu41–Cys384 enclose the TTL domain. Residues Lys169, Arg175–Gly176, Gln197–Ile200, and Lys210–Asp212 each bind ATP. A protein is bound at residue Arg175. Residue Arg236 coordinates L-glutamate. Residue Thr255 to Asn256 coordinates ATP. 2 residues coordinate L-glutamate: Ser258 and Lys278. Asp330, Glu343, and Asn345 together coordinate Mg(2+). Lys361 lines the L-glutamate pocket. The disordered stretch occupies residues Ser479–Thr499.

Belongs to the tubulin--tyrosine ligase family. Requires Mg(2+) as cofactor. In terms of tissue distribution, highly expressed in brain, kidney, liver and testis. Expressed in heart, lung, muscle and spleen.

Probable tubulin polyglutamylase that generates side chains of glutamate on the gamma-carboxyl group of specific glutamate residues within the C-terminal tail of target proteins. Similar to TTLL1, may acquire enzymatic activity only in complex with other proteins as it is most likely lacking domains important for autonomous activity. Probably involved in the side-chain initiation step of the polyglutamylation reaction rather than the elongation step. The chain is Probable tubulin polyglutamylase TTLL2 from Mus musculus (Mouse).